Consider the following 429-residue polypeptide: UDP-N-acetylglucosamine 1-carboxyvinyltransferase (429 aa).

22 to 23 (KN) is a phosphoenolpyruvate binding site. UDP-N-acetyl-alpha-D-glucosamine is bound at residue arginine 102. Residue cysteine 126 is the Proton donor of the active site. Cysteine 126 carries the post-translational modification 2-(S-cysteinyl)pyruvic acid O-phosphothioketal. Residues aspartate 316 and isoleucine 338 each coordinate UDP-N-acetyl-alpha-D-glucosamine.

The protein belongs to the EPSP synthase family. MurA subfamily.

It is found in the cytoplasm. The catalysed reaction is phosphoenolpyruvate + UDP-N-acetyl-alpha-D-glucosamine = UDP-N-acetyl-3-O-(1-carboxyvinyl)-alpha-D-glucosamine + phosphate. It functions in the pathway cell wall biogenesis; peptidoglycan biosynthesis. Its function is as follows. Cell wall formation. Adds enolpyruvyl to UDP-N-acetylglucosamine. The protein is UDP-N-acetylglucosamine 1-carboxyvinyltransferase of Methylorubrum extorquens (strain PA1) (Methylobacterium extorquens).